Here is a 109-residue protein sequence, read N- to C-terminus: PRTRRVKRSDGRGNGGTPEEKRPRTAFSGEQLARLKREFAENRYLTERRRQQLSRDLGLNEAQIKIWFQNKRAKIKKASGQKNPLALQLMAQGLYNHSTVPLTKEEEEQ.

The segment at Pro-1–Gln-31 is disordered. Positions Glu-20 to Ser-79 form a DNA-binding region, homeobox.

Belongs to the engrailed homeobox family.

Its subcellular location is the nucleus. This chain is Homeobox protein E60, found in Apis mellifera (Honeybee).